We begin with the raw amino-acid sequence, 295 residues long: Acetylglutamate kinase (295 aa).

Residues 67 to 68 (GG), R89, and N191 each bind substrate.

The protein belongs to the acetylglutamate kinase family. ArgB subfamily.

The protein localises to the cytoplasm. The enzyme catalyses N-acetyl-L-glutamate + ATP = N-acetyl-L-glutamyl 5-phosphate + ADP. It functions in the pathway amino-acid biosynthesis; L-arginine biosynthesis; N(2)-acetyl-L-ornithine from L-glutamate: step 2/4. Functionally, catalyzes the ATP-dependent phosphorylation of N-acetyl-L-glutamate. The chain is Acetylglutamate kinase from Nitrosomonas eutropha (strain DSM 101675 / C91 / Nm57).